The sequence spans 446 residues: Exodeoxyribonuclease 7 large subunit (446 aa).

Belongs to the XseA family. Heterooligomer composed of large and small subunits.

It localises to the cytoplasm. The enzyme catalyses Exonucleolytic cleavage in either 5'- to 3'- or 3'- to 5'-direction to yield nucleoside 5'-phosphates.. Its function is as follows. Bidirectionally degrades single-stranded DNA into large acid-insoluble oligonucleotides, which are then degraded further into small acid-soluble oligonucleotides. The polypeptide is Exodeoxyribonuclease 7 large subunit (Xanthomonas campestris pv. campestris (strain B100)).